A 691-amino-acid chain; its full sequence is Two-component response regulator ORR21 (691 aa).

One can recognise a Response regulatory domain in the interval 17 to 132 (KVLVVDDDPT…ELKNIWQHVI (116 aa)). A 4-aspartylphosphate modification is found at Asp68. Residues 139-155 (NKEHEHSGSLDDTDRTR) are compositionally biased toward basic and acidic residues. Positions 139 to 204 (NKEHEHSGSL…DPSSTSKKPR (66 aa)) are disordered. Positions 199-258 (TSKKPRVVWSVELHQQFVNAVNHLGIDKAVPKKILELMNVPGLTRENVASHLQKFRLYLK) form a DNA-binding region, myb-like GARP.

Belongs to the ARR family. Type-B subfamily. Two-component system major event consists of a His-to-Asp phosphorelay between a sensor histidine kinase (HK) and a response regulator (RR). In plants, the His-to-Asp phosphorelay involves an additional intermediate named Histidine-containing phosphotransfer protein (HPt). This multistep phosphorelay consists of a His-Asp-His-Asp sequential transfer of a phosphate group between first a His and an Asp of the HK protein, followed by the transfer to a conserved His of the HPt protein and finally the transfer to an Asp in the receiver domain of the RR protein.

Its subcellular location is the nucleus. Its function is as follows. Transcriptional activator that binds specific DNA sequence. Functions as a response regulator involved in His-to-Asp phosphorelay signal transduction system. Phosphorylation of the Asp residue in the receiver domain activates the ability of the protein to promote the transcription of target genes. May directly activate some type-A response regulators in response to cytokinins. This is Two-component response regulator ORR21 from Oryza sativa subsp. japonica (Rice).